Consider the following 216-residue polypeptide: PEP-dependent dihydroxyacetone kinase 2, ADP-binding subunit DhaL (216 aa).

The region spanning 9 to 210 (AFFGHVLQDM…SWMLMNVILE (202 aa)) is the DhaL domain. Aspartate 33, aspartate 38, and aspartate 40 together coordinate Mg(2+). ADP is bound by residues 41-44 (HGIN), 84-85 (AS), glycine 126, methionine 135, arginine 182, and 195-197 (DPG).

Homodimer. The dihydroxyacetone kinase complex is composed of a homodimer of DhaM, a homodimer of DhaK and the subunit DhaL. It depends on Mg(2+) as a cofactor.

It is found in the cytoplasm. It catalyses the reaction dihydroxyacetone + phosphoenolpyruvate = dihydroxyacetone phosphate + pyruvate. Its pathway is polyol metabolism; glycerol degradation. Its function is as follows. ADP-binding subunit of the dihydroxyacetone kinase, which is responsible for the phosphoenolpyruvate (PEP)-dependent phosphorylation of dihydroxyacetone. DhaL-ADP is converted to DhaL-ATP via a phosphoryl group transfer from DhaM and transmits it to dihydroxyacetone binds to DhaK. The protein is PEP-dependent dihydroxyacetone kinase 2, ADP-binding subunit DhaL of Listeria innocua serovar 6a (strain ATCC BAA-680 / CLIP 11262).